The primary structure comprises 443 residues: DNA primase DnaG (443 aa).

The Toprim domain maps to 169–243 (DSIIIVEGRA…DIDYVSRAPY (75 aa)). Positions 175, 217, and 219 each coordinate Mg(2+).

Belongs to the archaeal DnaG primase family. Forms a ternary complex with MCM helicase and DNA. Mg(2+) serves as cofactor.

The enzyme catalyses ssDNA + n NTP = ssDNA/pppN(pN)n-1 hybrid + (n-1) diphosphate.. RNA polymerase that catalyzes the synthesis of short RNA molecules used as primers for DNA polymerase during DNA replication. This is DNA primase DnaG from Methanococcus vannielii (strain ATCC 35089 / DSM 1224 / JCM 13029 / OCM 148 / SB).